The sequence spans 614 residues: Inactive leucine-rich repeat receptor-like serine/threonine-protein kinase At5g24100 (614 aa).

The signal sequence occupies residues 1–21 (MSRGRSFIFYFVLFLFFGSSA). Residues 22 to 251 (LYSQVTGDLA…KNGIYISEPA (230 aa)) lie on the Extracellular side of the membrane. N-linked (GlcNAc...) asparagine glycosylation occurs at N53. 6 LRR repeats span residues 71–95 (GTRV…TISR), 96–120 (LSEL…FLQL), 121–146 (KKLK…TWTN), 148–167 (TVLD…GFAN), 168–190 (LTGL…DLNL), and 191–214 (PGLR…LKRF). N146, N158, and N167 each carry an N-linked (GlcNAc...) asparagine glycan. N-linked (GlcNAc...) asparagine glycans are attached at residues N197 and N202. The chain crosses the membrane as a helical span at residues 252–272 (ILGIAISVCFVIFFVIAVVII). Residues 273–614 (VCYVKRQRKS…VETLEEIERD (342 aa)) lie on the Cytoplasmic side of the membrane. The Protein kinase domain occupies 341–611 (IASAEFLGKG…VKVVETLEEI (271 aa)). At S343 the chain carries Phosphoserine. ATP is bound by residues 347–355 (LGKGVFGMT) and K369. S420 carries the post-translational modification Phosphoserine. Residues T441, T514, and T591 each carry the phosphothreonine modification. Residues 578-601 (AKLLQMLQLGTSCTAMVPAKRPDM) form an LRR 7 repeat.

It belongs to the protein kinase superfamily. Ser/Thr protein kinase family.

It is found in the cell membrane. The chain is Inactive leucine-rich repeat receptor-like serine/threonine-protein kinase At5g24100 from Arabidopsis thaliana (Mouse-ear cress).